We begin with the raw amino-acid sequence, 356 residues long: tRNA N6-adenosine threonylcarbamoyltransferase (356 aa).

His115 and His119 together coordinate Fe cation. Residues 138-142, Asp171, Gly184, and Asn283 each bind substrate; that span reads LVSGG. Asp311 provides a ligand contact to Fe cation.

It belongs to the KAE1 / TsaD family. Fe(2+) is required as a cofactor.

It localises to the cytoplasm. It carries out the reaction L-threonylcarbamoyladenylate + adenosine(37) in tRNA = N(6)-L-threonylcarbamoyladenosine(37) in tRNA + AMP + H(+). Its function is as follows. Required for the formation of a threonylcarbamoyl group on adenosine at position 37 (t(6)A37) in tRNAs that read codons beginning with adenine. Is involved in the transfer of the threonylcarbamoyl moiety of threonylcarbamoyl-AMP (TC-AMP) to the N6 group of A37, together with TsaE and TsaB. TsaD likely plays a direct catalytic role in this reaction. The chain is tRNA N6-adenosine threonylcarbamoyltransferase from Prochlorococcus marinus (strain MIT 9215).